Here is a 613-residue protein sequence, read N- to C-terminus: Probable indole-3-acetic acid-amido synthetase GH3.12 (613 aa).

Belongs to the IAA-amido conjugating enzyme family. In terms of tissue distribution, expressed in roots.

Functionally, may catalyze the synthesis of indole-3-acetic acid (IAA)-amino acid conjugates, providing a mechanism for the plant to cope with the presence of excess auxin. In Oryza sativa subsp. japonica (Rice), this protein is Probable indole-3-acetic acid-amido synthetase GH3.12 (GH3.12).